A 93-amino-acid chain; its full sequence is DNA-directed RNA polymerase subunit omega (93 aa).

It belongs to the RNA polymerase subunit omega family. The RNAP catalytic core consists of 2 alpha, 1 beta, 1 beta' and 1 omega subunit. When a sigma factor is associated with the core the holoenzyme is formed, which can initiate transcription.

The catalysed reaction is RNA(n) + a ribonucleoside 5'-triphosphate = RNA(n+1) + diphosphate. Functionally, promotes RNA polymerase assembly. Latches the N- and C-terminal regions of the beta' subunit thereby facilitating its interaction with the beta and alpha subunits. The chain is DNA-directed RNA polymerase subunit omega from Glaesserella parasuis serovar 5 (strain SH0165) (Haemophilus parasuis).